Reading from the N-terminus, the 105-residue chain is MNIYDVLIWMALGMIALLIQYGIWRYLKGKGKDPIPLQICGFLANFFFIFALAWGYSSFSEREYQAIGMGFIFFGGTALIPAIITYRLANHPAKKIRESSDSISA.

3 consecutive transmembrane segments (helical) span residues 3 to 23 (IYDVLIWMALGMIALLIQYGI), 35 to 55 (IPLQICGFLANFFFIFALAWG), and 66 to 86 (AIGMGFIFFGGTALIPAIITY).

This sequence belongs to the PceB family.

It localises to the cell membrane. May act as a membrane anchor for the tetrachloroethene reductive dehalogenase PceA. The sequence is that of Probable tetrachloroethene reductive dehalogenase membrane anchor protein from Desulfitobacterium hafniense (Desulfitobacterium frappieri).